The primary structure comprises 317 residues: Olfactory receptor 2G2 (317 aa).

Topologically, residues 1–28 (MGMVRHTNESNLAGFILLGFSDYPQLQK) are extracellular. Asn8 carries an N-linked (GlcNAc...) asparagine glycan. A helical membrane pass occupies residues 29-52 (VLFVLILILYLLTILGNTTIILVS). The Cytoplasmic segment spans residues 53–60 (RLEPKLHM). The helical transmembrane segment at 61-82 (PMYFFLSHLSFLYRCFTSSVIP) threads the bilayer. The Extracellular portion of the chain corresponds to 83-103 (QLLVNLWEPMKTIAYGGCLVH). An intrachain disulfide couples Cys100 to Cys192. Residues 104–123 (LYNSHALGSTECVLPAVMSC) form a helical membrane-spanning segment. Residues 124–142 (DRYVAVCRPLHYTVLMHIH) lie on the Cytoplasmic side of the membrane. The helical transmembrane segment at 143 to 161 (LCMALASMAWLSGIATTLV) threads the bilayer. Topologically, residues 162-198 (QSTLTLQLPFCGHRQVDHFICEVPVLIKLACVGTTFN) are extracellular. The helical transmembrane segment at 199 to 222 (EAELFVASILFLIVPVSFILVSSG) threads the bilayer. Residues 223–239 (YIAHAVLRIKSATRRQK) lie on the Cytoplasmic side of the membrane. The helical transmembrane segment at 240–262 (AFGTCFSHLTVVTIFYGTIIFMY) threads the bilayer. Topologically, residues 263–275 (LQPAKSRSRDQGK) are extracellular. A helical membrane pass occupies residues 276-295 (FVSLFYTVVTRMLNPLIYTL). Residues 296–317 (RIKEVKGALKKVLAKALGVNIL) lie on the Cytoplasmic side of the membrane.

Belongs to the G-protein coupled receptor 1 family.

It is found in the cell membrane. In terms of biological role, odorant receptor. The sequence is that of Olfactory receptor 2G2 (OR2G2) from Homo sapiens (Human).